The chain runs to 874 residues: MAKKEVSASKPGNTKKDNVLLKKRKQQAVEKEEAEKEKEEGVSEDEFNVQGLIDPESDSDDEGAAAAEEEEEEEEQQQDVKELDLDKGEVISSDSDAEDFDSEEELNKLLGEEDDPSDYSSVGFSDEPKEDGDEQDEQDAFAAADAATDDDAFGDVKLKNLSITDPSKLEVRTKFSDGTPRIIKPEIEPVYDSDDSDAENFNTIGNIPISAYEEMPHIGYDINGKRIMRPAKGSALDQLLESIDLPQGWTGLLDQNTGAPLKITDEELELIRKIQQQENTDENINPYEPLNDWFTKNQEVMPLTAVPEPKRRFVPSKHEAKRVMKIVKAIREGRILTPEKAKELKEKETEEMNYDLWQNESEVPDHIMNLRAPKLPPPTNEESYNPPEEYLLNEEEKQKWLEQDPVDRERNFIPQKYSSLRLVPGYQDSVRERFERSLDLYLAPRLRKNKLNIDPESLIPELPSPKDLRPFPIKCSTVYEGHTGKIRTLSIDPQGLWLATGSDDGSVRIWEVLTGRQVFKAQLVNKEHNGEDHIESLEWNPNAQTGILAVCAGENIYLLVPPIFGFEIENTGKLRIESGWGYDTFGNTKQDLKVKGEDTKGDLDDDEEEEEEEEDDDDDEGQGKVKAHNSTAPAKKDVAKWINPNSSQQAMGISAIIQCRRTVKKISWHRKGDYFVTVSPDSKNTAVLIHQLSKHLSQSPFRKSKGVIMDAKFHPFKPQLFVASQRQIKIYDLAQQTLLKKLLPGVRLLSTIDLHPRGDNLLAASYDKRVLWHDLDLAATPYKTLRYHEKAVRQIKYHKGSLPLFASASDDGIIHVFHGTVYDDLMTNPLLVPLKKLSGHKVINQIGVLDIVWHPKEAWLFSAGADGTARLWTT.

The interval 1–148 is disordered; the sequence is MAKKEVSASK…DAFAAADAAT (148 aa). Residues 27–41 show a composition bias toward basic and acidic residues; it reads QAVEKEEAEKEKEEG. Residues 55 to 77 are compositionally biased toward acidic residues; it reads PESDSDDEGAAAAEEEEEEEEQQ. A compositionally biased stretch (basic and acidic residues) spans 78-89; the sequence is QDVKELDLDKGE. 2 stretches are compositionally biased toward acidic residues: residues 95–104 and 128–139; these read SDAEDFDSEE and PKEDGDEQDEQD. The interval 312–429 is required for interaction with NOP7; it reads RFVPSKHEAK…LRLVPGYQDS (118 aa). A required for interaction with YTM1 region spans residues 429-465; that stretch reads SVRERFERSLDLYLAPRLRKNKLNIDPESLIPELPSP. WD repeat units lie at residues 481–520 and 529–569; these read GHTG…QVFK and NGED…FEIE. Residues 593–602 show a composition bias toward basic and acidic residues; it reads KVKGEDTKGD. The disordered stretch occupies residues 593-640; the sequence is KVKGEDTKGDLDDDEEEEEEEEDDDDDEGQGKVKAHNSTAPAKKDVAK. A compositionally biased stretch (acidic residues) spans 603–620; it reads LDDDEEEEEEEEDDDDDE. 5 WD repeats span residues 658-700, 703-741, 744-783, 787-827, and 843-874; these read QCRR…SQSP, KSKG…LLKK, PGVR…TPYK, YHEK…DLMT, and INQI…LWTT.

This sequence belongs to the WD repeat BOP1/ERB1 family. Component of the NOP7 complex, composed of ERB1, NOP7 and YTM1. The complex is held together by ERB1, which interacts with NOP7 via its N-terminal domain and with YTM1 via a high-affinity interaction between the seven-bladed beta-propeller domains of the 2 proteins. The NOP7 complex associates with the 66S pre-ribosome.

The protein resides in the nucleus. Its subcellular location is the nucleolus. It is found in the nucleoplasm. In terms of biological role, component of the NOP7 complex, which is required for maturation of the 25S and 5.8S ribosomal RNAs and formation of the 60S ribosome. The sequence is that of Ribosome biogenesis protein ERB1 from Lodderomyces elongisporus (strain ATCC 11503 / CBS 2605 / JCM 1781 / NBRC 1676 / NRRL YB-4239) (Yeast).